The sequence spans 89 residues: RNA-binding protein Hfq (89 aa).

One can recognise a Sm domain in the interval 9-68; sequence DPFLNALRRERVPVSIYLVNGIKLQGQVESFDQFVILLKNTVSQMVYKHAISTVVPARAL.

Belongs to the Hfq family. As to quaternary structure, homohexamer.

Functionally, RNA chaperone that binds small regulatory RNA (sRNAs) and mRNAs to facilitate mRNA translational regulation in response to envelope stress, environmental stress and changes in metabolite concentrations. Also binds with high specificity to tRNAs. This chain is RNA-binding protein Hfq, found in Shewanella denitrificans (strain OS217 / ATCC BAA-1090 / DSM 15013).